The primary structure comprises 232 residues: Triosephosphate isomerase (232 aa).

Residue 6 to 8 (NFK) participates in substrate binding. H90 functions as the Electrophile in the catalytic mechanism. E159 (proton acceptor) is an active-site residue. The substrate site is built by G165 and S195.

This sequence belongs to the triosephosphate isomerase family. As to quaternary structure, homodimer.

Its subcellular location is the cytoplasm. It carries out the reaction D-glyceraldehyde 3-phosphate = dihydroxyacetone phosphate. It functions in the pathway carbohydrate biosynthesis; gluconeogenesis. It participates in carbohydrate degradation; glycolysis; D-glyceraldehyde 3-phosphate from glycerone phosphate: step 1/1. In terms of biological role, involved in the gluconeogenesis. Catalyzes stereospecifically the conversion of dihydroxyacetone phosphate (DHAP) to D-glyceraldehyde-3-phosphate (G3P). This is Triosephosphate isomerase from Wolinella succinogenes (strain ATCC 29543 / DSM 1740 / CCUG 13145 / JCM 31913 / LMG 7466 / NCTC 11488 / FDC 602W) (Vibrio succinogenes).